A 655-amino-acid chain; its full sequence is Carboxypeptidase S1 homolog B (655 aa).

An N-terminal signal peptide occupies residues 1–21 (MRPFARAALCLLAAAGHLAQA). A disulfide bond links C51 and C123. N-linked (GlcNAc...) asparagine glycosylation is found at N130, N163, and N186. Residue S240 is part of the active site. Residues N266, N302, and N311 are each glycosylated (N-linked (GlcNAc...) asparagine). Cystine bridges form between C328-C364 and C335-C357. An N-linked (GlcNAc...) asparagine glycan is attached at N414. D459 is an active-site residue. C462 provides a ligand contact to substrate. N-linked (GlcNAc...) asparagine glycans are attached at residues N475, N493, and N506. Residue H517 is part of the active site. E518 lines the substrate pocket. N-linked (GlcNAc...) asparagine glycans are attached at residues N598 and N612. G631 carries the GPI-anchor amidated glycine lipid modification. A propeptide spans 632 to 655 (AALVSGRIKFHVHVIKSFDYYIFI) (removed in mature form).

The protein belongs to the peptidase S10 family.

The protein localises to the cell membrane. It catalyses the reaction Preferential release of a C-terminal arginine or lysine residue.. Functionally, extracellular serine carboxypeptidase that contributes to pathogenicity. This chain is Carboxypeptidase S1 homolog B (SCPB), found in Arthroderma otae (strain ATCC MYA-4605 / CBS 113480) (Microsporum canis).